Here is a 311-residue protein sequence, read N- to C-terminus: Methionyl-tRNA formyltransferase (311 aa).

109 to 112 (SLLP) contributes to the (6S)-5,6,7,8-tetrahydrofolate binding site.

It belongs to the Fmt family.

It catalyses the reaction L-methionyl-tRNA(fMet) + (6R)-10-formyltetrahydrofolate = N-formyl-L-methionyl-tRNA(fMet) + (6S)-5,6,7,8-tetrahydrofolate + H(+). Attaches a formyl group to the free amino group of methionyl-tRNA(fMet). The formyl group appears to play a dual role in the initiator identity of N-formylmethionyl-tRNA by promoting its recognition by IF2 and preventing the misappropriation of this tRNA by the elongation apparatus. This chain is Methionyl-tRNA formyltransferase, found in Acetivibrio thermocellus (strain ATCC 27405 / DSM 1237 / JCM 9322 / NBRC 103400 / NCIMB 10682 / NRRL B-4536 / VPI 7372) (Clostridium thermocellum).